Here is a 195-residue protein sequence, read N- to C-terminus: 3-isopropylmalate dehydratase small subunit (195 aa).

It belongs to the LeuD family. LeuD type 1 subfamily. In terms of assembly, heterodimer of LeuC and LeuD.

It catalyses the reaction (2R,3S)-3-isopropylmalate = (2S)-2-isopropylmalate. Its pathway is amino-acid biosynthesis; L-leucine biosynthesis; L-leucine from 3-methyl-2-oxobutanoate: step 2/4. Its function is as follows. Catalyzes the isomerization between 2-isopropylmalate and 3-isopropylmalate, via the formation of 2-isopropylmaleate. The polypeptide is 3-isopropylmalate dehydratase small subunit (Rubrobacter xylanophilus (strain DSM 9941 / JCM 11954 / NBRC 16129 / PRD-1)).